We begin with the raw amino-acid sequence, 171 residues long: UPF0312 protein SE_0264 (171 aa).

Belongs to the UPF0312 family.

This is UPF0312 protein SE_0264 from Staphylococcus epidermidis (strain ATCC 12228 / FDA PCI 1200).